Consider the following 348-residue polypeptide: Alcohol dehydrogenase 2 (348 aa).

Ser-2 bears the N-acetylserine mark. Zn(2+) is bound by residues Cys-44, His-67, Cys-98, Cys-101, Cys-104, Cys-112, and Cys-154. Residues 178 to 184, Asp-202, Lys-207, 269 to 271, and Arg-341 contribute to the NAD(+) site; these read GAAGGLG and VGL.

It belongs to the zinc-containing alcohol dehydrogenase family. In terms of assembly, homotetramer. Zn(2+) is required as a cofactor.

It localises to the cytoplasm. The catalysed reaction is a primary alcohol + NAD(+) = an aldehyde + NADH + H(+). The enzyme catalyses a secondary alcohol + NAD(+) = a ketone + NADH + H(+). The sequence is that of Alcohol dehydrogenase 2 (ADH2) from Kluyveromyces marxianus (Yeast).